Here is a 154-residue protein sequence, read N- to C-terminus: D-aminoacyl-tRNA deacylase (154 aa).

The Gly-cisPro motif, important for rejection of L-amino acids signature appears at 142–143 (GP).

The protein belongs to the DTD family. As to quaternary structure, homodimer.

Its subcellular location is the cytoplasm. It catalyses the reaction glycyl-tRNA(Ala) + H2O = tRNA(Ala) + glycine + H(+). The catalysed reaction is a D-aminoacyl-tRNA + H2O = a tRNA + a D-alpha-amino acid + H(+). Its function is as follows. An aminoacyl-tRNA editing enzyme that deacylates mischarged D-aminoacyl-tRNAs. Also deacylates mischarged glycyl-tRNA(Ala), protecting cells against glycine mischarging by AlaRS. Acts via tRNA-based rather than protein-based catalysis; rejects L-amino acids rather than detecting D-amino acids in the active site. By recycling D-aminoacyl-tRNA to D-amino acids and free tRNA molecules, this enzyme counteracts the toxicity associated with the formation of D-aminoacyl-tRNA entities in vivo and helps enforce protein L-homochirality. This chain is D-aminoacyl-tRNA deacylase (DTD1), found in Yarrowia lipolytica (strain CLIB 122 / E 150) (Yeast).